A 145-amino-acid polypeptide reads, in one-letter code: Large ribosomal subunit protein uL15 (145 aa).

Residues 1 to 43 (MRLNTIKPGAGSKSAAKRVGRGIGSGLGKTCGRGHKGQKSRAG) form a disordered region. A compositionally biased stretch (gly residues) spans 21–31 (RGIGSGLGKTC).

This sequence belongs to the universal ribosomal protein uL15 family. Part of the 50S ribosomal subunit.

Its function is as follows. Binds to the 23S rRNA. In Aromatoleum aromaticum (strain DSM 19018 / LMG 30748 / EbN1) (Azoarcus sp. (strain EbN1)), this protein is Large ribosomal subunit protein uL15.